Reading from the N-terminus, the 390-residue chain is Fluoride export protein 1 (390 aa).

The segment at 1 to 22 (MVAPLVSESQSSSIEETDEQQQ) is disordered. The Cytoplasmic portion of the chain corresponds to 1 to 72 (MVAPLVSESQ…RFLDKTQKYY (72 aa)). Residues 73-93 (PVILNIVHGAIWGVLVRKGLM) traverse the membrane as a helical segment. At 94-100 (SLTTYSG) the chain is on the extracellular side. Residues 101-121 (SFLSGVIWANFAACVVMGLAI) form a helical membrane-spanning segment. Residues 122–143 (DGEVFWIRLLEEKDYPNKGAIP) are Cytoplasmic-facing. Residues 144–164 (VYTGLTTGFCGTVSSFSSVIL) form a helical membrane-spanning segment. The Extracellular portion of the chain corresponds to 165–185 (EAFNKAADTDIGVRHHYPNGA). A helical membrane pass occupies residues 186–206 (YGIMQFLAVILAQFGLSIMGF). At 207–229 (HMGKQFSAVVDNYLPLVTKRIYK) the chain is on the cytoplasmic side. Residues 230–250 (VLELTSMILGVVLVVITCILI) form a helical membrane-spanning segment. Topologically, residues 251–256 (GVKKQG) are extracellular. The chain crosses the membrane as a helical span at residues 257–279 (SWRSWTFSMLFAPFGALLRYYLS). The Cytoplasmic segment spans residues 280-290 (KFLNNKVSNFP). A helical transmembrane segment spans residues 291-311 (LGTFTANFLGTLLLAVFTLLA). The Extracellular portion of the chain corresponds to 312–338 (RGKLPGGKGHIVTNTIALHVLEGLDDG). Residues 339-359 (FCGGLTTVSTFVVELFGLKTL) form a helical membrane-spanning segment. Topologically, residues 360–368 (FSYRYGTIS) are cytoplasmic. A helical transmembrane segment spans residues 369 to 389 (ILVCFAGVVLILGSYNWSVGL). A topological domain (extracellular) is located at residue Asp-390.

Belongs to the fluoride channel Fluc/FEX (TC 1.A.43) family.

Its subcellular location is the cell membrane. The catalysed reaction is fluoride(in) = fluoride(out). Its function is as follows. Fluoride channel required for the rapid expulsion of cytoplasmic fluoride. In Candida albicans (strain SC5314 / ATCC MYA-2876) (Yeast), this protein is Fluoride export protein 1.